Consider the following 599-residue polypeptide: Elongation factor 4 (599 aa).

In terms of domain architecture, tr-type G spans 2 to 184 (KNIRNFSIIA…RLVRDIPPPE (183 aa)). GTP contacts are provided by residues 14–19 (DHGKST) and 131–134 (NKID).

This sequence belongs to the TRAFAC class translation factor GTPase superfamily. Classic translation factor GTPase family. LepA subfamily.

It is found in the cell inner membrane. The enzyme catalyses GTP + H2O = GDP + phosphate + H(+). Functionally, required for accurate and efficient protein synthesis under certain stress conditions. May act as a fidelity factor of the translation reaction, by catalyzing a one-codon backward translocation of tRNAs on improperly translocated ribosomes. Back-translocation proceeds from a post-translocation (POST) complex to a pre-translocation (PRE) complex, thus giving elongation factor G a second chance to translocate the tRNAs correctly. Binds to ribosomes in a GTP-dependent manner. This Shigella dysenteriae serotype 1 (strain Sd197) protein is Elongation factor 4.